Consider the following 291-residue polypeptide: 33 kDa chaperonin (291 aa).

2 disulfides stabilise this stretch: cysteine 237-cysteine 239 and cysteine 270-cysteine 273.

The protein belongs to the HSP33 family. Under oxidizing conditions two disulfide bonds are formed involving the reactive cysteines. Under reducing conditions zinc is bound to the reactive cysteines and the protein is inactive.

It localises to the cytoplasm. Redox regulated molecular chaperone. Protects both thermally unfolding and oxidatively damaged proteins from irreversible aggregation. Plays an important role in the bacterial defense system toward oxidative stress. In Bacillus cereus (strain B4264), this protein is 33 kDa chaperonin.